A 372-amino-acid chain; its full sequence is Protein phosphatase Mn(2+)-dependent 1K (372 aa).

Residues 1–29 (MLSTAFITLVRSGRNQVKKRVLLSSILLQ) constitute a mitochondrion transit peptide. The interval 46 to 61 (RCSRFDPDGSGQPATW) is critical for association with the BCKDH complex. Residues 94 to 346 (NVGCASLIGK…DNSTAVVVPF (253 aa)) form the PPM-type phosphatase domain. Mn(2+) contacts are provided by Asp127 and Gly128. Ser248 is subject to Phosphoserine. Positions 298 and 337 each coordinate Mn(2+).

It belongs to the PP2C family. Interacts with E1 and E2 components of the branched-chain alpha-ketoacid dehydrogenase (BCKDH) complex. Interacts with both BCKDHA and BCKDHB chains of the E1 subunit. Interacts with the 24-meric DBT/E2 core of the BCKD complex with a 1:1 stoichiometry; the N-terminal region (residues 49-61) of PPM1K and C-terminal linker of the lipoyl domain of DBT/E2 (residues 145-160) are critical for this interaction whereas the lipoyl prosthetic group is dispensable. Competes with BCKDK for binding to DBT/E2; this interaction is modulated by branched-chain alpha-keto acids (BCKAs). At steady state, BCKDH holoenzyme preferentially binds BCKDK and BCKDHA/E1 is phosphorylated. In response to high levels of BCKAs, BCKDK is replaced by PPM1K leading to BCKDHA/E1 dephosphorylation. The cofactor is Mn(2+).

The protein localises to the mitochondrion matrix. The enzyme catalyses O-phospho-L-seryl-[3-methyl-2-oxobutanoate dehydrogenase] + H2O = L-seryl-[3-methyl-2-oxobutanoate dehydrogenase] + phosphate. The catalysed reaction is O-phospho-L-seryl-[protein] + H2O = L-seryl-[protein] + phosphate. It functions in the pathway protein modification. In terms of biological role, serine/threonine-protein phosphatase component of macronutrients metabolism. Together with BCKDK serves as a metabolic regulatory node that coordinates branched-chain amino acids (BCAAs) and protein synthesis with glucose and lipid metabolism via two distinct phosphoprotein targets: BCKDHA/E1a subunit of the branched-chain alpha-ketoacid dehydrogenase (BCKDH) complex and ACLY, a lipogenic enzyme of Krebs cycle. At high levels of branched-chain ketoacids (BCKAs), dephosphorylates and activates mitochondrial BCKDH complex, a multisubunit complex consisting of three components, heterotetrameric E1 composed of BCKDHA and BCKDHB chains, 24-meric E2 core composed of DBT and homodimeric E3 composed of DLD, each involved in different steps of BCAA catabolism. Tightly associates with the E2 subunit of BCKDH complex and dephosphorylates Ser-333 of BCKDHA chain of the E1 subunit likely through on-off binding to individual E2 subunits of the 24-meric E2 core to increase the efficiency of the dephosphorylation reaction. Appears to dephosphorylate and inactivate cytosolic ACLY in response to changes of cellular carbohydrate abundance. Overnutrition and in particular high-fructose diet, activates MLXIPL/ChREBP leading to increased BCKDK to PPM1K ratio, phosphorylation of ACLY on Ser-454 and activation of its enzymatic activity that ultimately results in the generation of acetyl-CoA and malonyl-CoA immediate substrates of de novo lipogenesis. Recognizes phosphosites having SxS or RxxS motifs and strictly depends on Mn(2+) ions for the phosphatase activity. Regulates Ca(2+)-induced opening of mitochondrial transition pore and apoptotic cell death. The protein is Protein phosphatase Mn(2+)-dependent 1K (Ppm1k) of Rattus norvegicus (Rat).